Reading from the N-terminus, the 330-residue chain is MTATLNTVQDLEASVLAGTAITRDEALSLIDAPLDELSAAADRIRAQMCGDGFDMCSIINAKSGRCPENCTFCAQSIRYPTISVDSYPLITADELVRQAQENKDKGVIRFSIVTSGRKLRRDEVRHICEGVRRIKQEVGIEVCISAGLLSAEDFQALHDAGISRVHCNLETSRAYFPSICISHTFDDKIATLQAARDEGMSLCSGGILGLGESMEDRIDMALSARELGVNSFPVNVLVAIEGTPLAGTEQLRPEEVQRCVAIFRFILPQAAIRLAGGRELLGDDGKACFQSGANSAISGDMLTTTGTTIASDMALVKDLGYTVTLDHSHS.

The Radical SAM core domain occupies 48-278 (MCGDGFDMCS…QAAIRLAGGR (231 aa)). 3 residues coordinate [4Fe-4S] cluster: Cys-66, Cys-70, and Cys-73. [2Fe-2S] cluster-binding residues include Ser-111, Cys-143, Cys-203, and Arg-273.

This sequence belongs to the radical SAM superfamily. Biotin synthase family. As to quaternary structure, homodimer. [4Fe-4S] cluster is required as a cofactor. [2Fe-2S] cluster serves as cofactor.

The catalysed reaction is (4R,5S)-dethiobiotin + (sulfur carrier)-SH + 2 reduced [2Fe-2S]-[ferredoxin] + 2 S-adenosyl-L-methionine = (sulfur carrier)-H + biotin + 2 5'-deoxyadenosine + 2 L-methionine + 2 oxidized [2Fe-2S]-[ferredoxin]. The protein operates within cofactor biosynthesis; biotin biosynthesis; biotin from 7,8-diaminononanoate: step 2/2. Catalyzes the conversion of dethiobiotin (DTB) to biotin by the insertion of a sulfur atom into dethiobiotin via a radical-based mechanism. This is Biotin synthase 2 from Corynebacterium diphtheriae (strain ATCC 700971 / NCTC 13129 / Biotype gravis).